We begin with the raw amino-acid sequence, 196 residues long: Probable GTP-binding protein EngB (196 aa).

One can recognise an EngB-type G domain in the interval 21–195; that stretch reads DVSEICLIGR…YELIDKLLGS (175 aa). Residues 29 to 36, 56 to 60, 75 to 78, 142 to 145, and 174 to 176 contribute to the GTP site; these read GRSNVGKS, GKTRL, DAPG, TKLD, and ISN. The Mg(2+) site is built by Ser-36 and Thr-58.

Belongs to the TRAFAC class TrmE-Era-EngA-EngB-Septin-like GTPase superfamily. EngB GTPase family. It depends on Mg(2+) as a cofactor.

In terms of biological role, necessary for normal cell division and for the maintenance of normal septation. This chain is Probable GTP-binding protein EngB, found in Mycoplasma mycoides subsp. mycoides SC (strain CCUG 32753 / NCTC 10114 / PG1).